Consider the following 2067-residue polypeptide: Nuclear receptor coactivator 6 (2067 aa).

Residues 1–932 (MVLDDLPNFE…PPRKKKNCHQ (932 aa)) form a TBP/GTF2A-binding region region. The segment at 1–1060 (MVLDDLPNFE…LPVSQNVHPP (1060 aa)) is CREBBP-binding region. Positions 1-1314 (MVLDDLPNFE…QAHKLDSVVV (1314 aa)) are NCOA1-binding region. An Asymmetric dimethylarginine modification is found at Arg95. Disordered regions lie at residues 181–253 (AVMT…RQMN) and 293–548 (TRPL…PGNS). A compositionally biased stretch (low complexity) spans 293–304 (TRPLQQHQQQPQ). 6 stretches are compositionally biased toward polar residues: residues 338–347 (SLGTMTTNQG), 357–372 (MQAQ…TVQT), 383–405 (GSQQ…QFTA), 421–457 (PLQQ…QQQM), 465–506 (NPLS…QGPQ), and 526–548 (GQAN…PGNS). The interval 777–931 (VNNSPSQVMG…KPPRKKKNCH (155 aa)) is NCOA6IP-binding region. Ser888 carries the phosphoserine modification. Positions 891–895 (LVNLL) match the LXXLL motif 1 motif. 5 disordered regions span residues 903 to 1279 (HFGV…QGLN), 1313 to 1358 (VVNS…APKL), 1424 to 1481 (NIPQ…EENK), 1497 to 1581 (QLLD…IPPV), and 1769 to 1822 (LNPD…GKGK). The span at 907–916 (NNKQNNTNAN) shows a compositional bias: low complexity. A compositionally biased stretch (basic residues) spans 917–929 (KPKKKKPPRKKKN). Positions 984–996 (QRPLPQMPPQLMQ) are enriched in low complexity. Positions 999–1024 (APPPQPPQQQPQPQLPQQQQPPPPSQ) are enriched in pro residues. Residues 1025-1044 (PQSQQQQQQQQMMMMLMMQQ) are compositionally biased toward low complexity. An asymmetric dimethylarginine mark is found at Arg1050 and Arg1061. Residues 1066–1078 (PDSQRMPVQQSGN) are compositionally biased toward polar residues. Arg1099 carries the post-translational modification Asymmetric dimethylarginine. The segment covering 1103 to 1123 (SVNTPMGSNSRKMVYQENPQN) has biased composition (polar residues). Residues 1124-1137 (SSSSPLGEMSSLPE) are compositionally biased toward low complexity. Polar residues-rich tracts occupy residues 1152-1165 (NMPS…NQLM), 1176-1194 (LSAT…SLPS), and 1205-1217 (APTQ…TPNR). Over residues 1222–1235 (PYYPQTPNNRPPST) the composition is skewed to pro residues. The span at 1313–1324 (VVNSGKQSNPGT) shows a compositional bias: polar residues. A compositionally biased stretch (low complexity) spans 1326–1349 (KRASPSNSRRSSPGSSRKTTPSPG). Polar residues predominate over residues 1424-1435 (NIPQDSDCQNAQ). Positions 1495 to 1499 (LSQLL) match the LXXLL motif 2 motif. Positions 1545–1562 (EPSTSLSSPHSSEPCSTL) are enriched in low complexity. Positions 1644-2067 (SEGQSAAQSN…AVQSKRRKSK (424 aa)) are EP300/CRSP3-binding region. Residues 1775–1805 (SPQTNTSADQSTLPPSQPTTVVSSLLTNSPG) are compositionally biased toward polar residues. Residues 1806–1818 (SSANRRSPVSSSK) are compositionally biased toward low complexity. An N6-acetyllysine mark is found at Lys1822 and Lys1825. Disordered regions lie at residues 1840-1911 (GSLE…LPGG) and 1957-2067 (VGSH…RKSK). A compositionally biased stretch (polar residues) spans 1871 to 1883 (EQCSTELDSKTPT). Low complexity predominate over residues 1892-1904 (MTSSPMAPSSTST). Residues 2005–2014 (EPKEIVEKSK) show a composition bias toward basic and acidic residues. Ser2022 bears the Phosphoserine mark.

In terms of assembly, monomer and homodimer. Interacts in vitro with the basal transcription factors GTF2A and TBP, suggesting an autonomous transactivation function. Interacts with NCOA1, CRSP3, RBM14, the histone acetyltransferase proteins EP300 and CREBBP, and with methyltransferase proteins NCOA6IP and PRMT2. Interacts with RBM39. Component of the MLL2/3 complex (also named ASCOM complex), at least composed of KMT2D/MLL2 or KMT2C/MLL3, ASH2L, RBBP5, WDR5, NCOA6, DPY30, KDM6A, PAXIP1/PTIP, PAGR1 and alpha- and beta-tubulin. Interacts with ZNF335; may enhance ligand-dependent transcriptional activation by nuclear hormone receptors. Post-translationally, phosphorylated. Widely expressed. High expression in testis and weak expression in small intestine.

It localises to the nucleus. Nuclear receptor coactivator that directly binds nuclear receptors and stimulates the transcriptional activities in a hormone-dependent fashion. Coactivates expression in an agonist- and AF2-dependent manner. Involved in the coactivation of different nuclear receptors, such as for steroids (GR and ERs), retinoids (RARs and RXRs), thyroid hormone (TRs), vitamin D3 (VDR) and prostanoids (PPARs). Probably functions as a general coactivator, rather than just a nuclear receptor coactivator. May also be involved in the coactivation of the NF-kappa-B pathway. May coactivate expression via a remodeling of chromatin and its interaction with histone acetyltransferase proteins. Involved in placental, cardiac, hepatic and embryonic development. This is Nuclear receptor coactivator 6 (Ncoa6) from Mus musculus (Mouse).